Here is a 208-residue protein sequence, read N- to C-terminus: Small ribosomal subunit protein uS4 (208 aa).

The S4 RNA-binding domain maps to 95-161 (MRLDALVLRA…VPLQVAAAGA (67 aa)).

It belongs to the universal ribosomal protein uS4 family. Part of the 30S ribosomal subunit. Contacts protein S5. The interaction surface between S4 and S5 is involved in control of translational fidelity.

Its function is as follows. One of the primary rRNA binding proteins, it binds directly to 16S rRNA where it nucleates assembly of the body of the 30S subunit. With S5 and S12 plays an important role in translational accuracy. This is Small ribosomal subunit protein uS4 from Pseudarthrobacter chlorophenolicus (strain ATCC 700700 / DSM 12829 / CIP 107037 / JCM 12360 / KCTC 9906 / NCIMB 13794 / A6) (Arthrobacter chlorophenolicus).